The chain runs to 286 residues: Putative transcription factor kapC (286 aa).

The span at methionine 1–histidine 10 shows a compositional bias: pro residues. The tract at residues methionine 1–arginine 120 is disordered. Low complexity predominate over residues histidine 26–glutamine 40. Residues glutamine 41–methionine 54 show a composition bias toward pro residues. The segment covering glutamine 55 to isoleucine 67 has biased composition (polar residues). Residues proline 81 to glutamine 92 show a composition bias toward pro residues. The 64-residue stretch at proline 102–leucine 165 folds into the bZIP domain. Positions leucine 103 to tyrosine 126 are basic motif. Over residues arginine 108–alanine 118 the composition is skewed to low complexity. Residues leucine 130–leucine 161 are leucine-zipper. Residues arginine 197–serine 286 form a disordered region. Low complexity predominate over residues glycine 198–glycine 222.

This sequence belongs to the bZIP family.

The protein localises to the nucleus. Putative transcription factor. This is Putative transcription factor kapC (kapC) from Aspergillus terreus (strain NIH 2624 / FGSC A1156).